We begin with the raw amino-acid sequence, 255 residues long: tRNA (guanine-N(1)-)-methyltransferase (255 aa).

S-adenosyl-L-methionine contacts are provided by residues G113 and 133 to 138; that span reads IGDYVL.

It belongs to the RNA methyltransferase TrmD family. As to quaternary structure, homodimer.

It localises to the cytoplasm. It catalyses the reaction guanosine(37) in tRNA + S-adenosyl-L-methionine = N(1)-methylguanosine(37) in tRNA + S-adenosyl-L-homocysteine + H(+). In terms of biological role, specifically methylates guanosine-37 in various tRNAs. This Escherichia coli O6:K15:H31 (strain 536 / UPEC) protein is tRNA (guanine-N(1)-)-methyltransferase.